A 79-amino-acid chain; its full sequence is Cytochrome b (79 aa).

A run of 3 helical transmembrane segments spans residues 1–7 (TALFLAM), 31–52 (WLIR…YLHI), and 67–79 (WNIG…LTMM). Positions 37 and 51 each coordinate heme b.

It belongs to the cytochrome b family. The cytochrome bc1 complex contains 3 respiratory subunits (MT-CYB, CYC1 and UQCRFS1), 2 core proteins (UQCRC1 and UQCRC2) and probably 6 low-molecular weight proteins. Requires heme b as cofactor.

Its subcellular location is the mitochondrion inner membrane. In terms of biological role, component of the ubiquinol-cytochrome c reductase complex (complex III or cytochrome b-c1 complex) that is part of the mitochondrial respiratory chain. The b-c1 complex mediates electron transfer from ubiquinol to cytochrome c. Contributes to the generation of a proton gradient across the mitochondrial membrane that is then used for ATP synthesis. This is Cytochrome b (mt-cyb) from Julidochromis regani (Convict julie).